Consider the following 188-residue polypeptide: Protein GrpE 2 (188 aa).

The span at 1 to 29 shows a compositional bias: basic and acidic residues; sequence MDNQEKKTNYQNTDKENDLEKNKEKKNDE. The disordered stretch occupies residues 1-33; it reads MDNQEKKTNYQNTDKENDLEKNKEKKNDESIFQ.

Belongs to the GrpE family. As to quaternary structure, homodimer.

The protein resides in the cytoplasm. In terms of biological role, participates actively in the response to hyperosmotic and heat shock by preventing the aggregation of stress-denatured proteins, in association with DnaK and GrpE. It is the nucleotide exchange factor for DnaK and may function as a thermosensor. Unfolded proteins bind initially to DnaJ; upon interaction with the DnaJ-bound protein, DnaK hydrolyzes its bound ATP, resulting in the formation of a stable complex. GrpE releases ADP from DnaK; ATP binding to DnaK triggers the release of the substrate protein, thus completing the reaction cycle. Several rounds of ATP-dependent interactions between DnaJ, DnaK and GrpE are required for fully efficient folding. This is Protein GrpE 2 from Buchnera aphidicola subsp. Schizaphis graminum (strain Sg).